We begin with the raw amino-acid sequence, 949 residues long: Bifunctional uridylyltransferase/uridylyl-removing enzyme (949 aa).

The tract at residues 1–377 (MARHETSFPE…RFRNRVRKIP (377 aa)) is uridylyltransferase. The tract at residues 378-733 (GTLDFVDDGG…VRTHDFHAIT (356 aa)) is uridylyl-removing. Positions 494-610 (VDEHLLRAVD…VDFAERVQSL (117 aa)) constitute an HD domain. 2 ACT domains span residues 734 to 815 (EITV…DVIA) and 845 to 926 (VIEV…ERMP). Positions 925 to 949 (MPSGIIAPTPVPRASHGSKATKAET) are disordered.

This sequence belongs to the GlnD family. Mg(2+) is required as a cofactor.

The enzyme catalyses [protein-PII]-L-tyrosine + UTP = [protein-PII]-uridylyl-L-tyrosine + diphosphate. The catalysed reaction is [protein-PII]-uridylyl-L-tyrosine + H2O = [protein-PII]-L-tyrosine + UMP + H(+). Uridylyltransferase (UTase) activity is inhibited by glutamine, while glutamine activates uridylyl-removing (UR) activity. In terms of biological role, modifies, by uridylylation and deuridylylation, the PII regulatory proteins (GlnB and homologs), in response to the nitrogen status of the cell that GlnD senses through the glutamine level. Under low glutamine levels, catalyzes the conversion of the PII proteins and UTP to PII-UMP and PPi, while under higher glutamine levels, GlnD hydrolyzes PII-UMP to PII and UMP (deuridylylation). Thus, controls uridylylation state and activity of the PII proteins, and plays an important role in the regulation of nitrogen fixation and metabolism. The sequence is that of Bifunctional uridylyltransferase/uridylyl-removing enzyme from Sinorhizobium medicae (strain WSM419) (Ensifer medicae).